Reading from the N-terminus, the 526-residue chain is Peptide chain release factor 3 (526 aa).

In terms of domain architecture, tr-type G spans Asp9–Leu277. GTP is bound by residues Ser18–Thr25, Asp86–His90, and Asn140–Asp143.

Belongs to the TRAFAC class translation factor GTPase superfamily. Classic translation factor GTPase family. PrfC subfamily.

Its subcellular location is the cytoplasm. Increases the formation of ribosomal termination complexes and stimulates activities of RF-1 and RF-2. It binds guanine nucleotides and has strong preference for UGA stop codons. It may interact directly with the ribosome. The stimulation of RF-1 and RF-2 is significantly reduced by GTP and GDP, but not by GMP. The polypeptide is Peptide chain release factor 3 (Colwellia psychrerythraea (strain 34H / ATCC BAA-681) (Vibrio psychroerythus)).